Here is a 1111-residue protein sequence, read N- to C-terminus: Myosin IB heavy chain (1111 aa).

In terms of domain architecture, Myosin motor spans 9–691; that stretch reads QGTDDLVMLP…TVFLLEEALD (683 aa). 102-109 serves as a coordination point for ATP; the sequence is GESGAGKT. Serine 332 carries the phosphoserine modification. Residues 547-627 are actin-binding; the sequence is GSLQKKRPTT…GFAYRNTFDK (81 aa). In terms of domain architecture, TH1 spans 729 to 913; sequence KERQRNSIDR…KGLIGTIASG (185 aa). A disordered region spans residues 910–1058; sequence IASGLPSSTD…PAPQPSRPTA (149 aa). Residues 914–928 are compositionally biased toward polar residues; it reads LPSSTDSTPKNYNPN. Low complexity-rich tracts occupy residues 929–944, 952–967, and 991–1012; these read SMSQ…QSAG, GAGQ…QQRP, and PMGA…LPQP. Over residues 1017-1040 the composition is skewed to gly residues; it reads GAPGGRGAPMGRGAPGGGPAGAGG. Residues 1053–1111 enclose the SH3 domain; the sequence is PSRPTAKALYDYDASSTDELSFKEGDIIFIVQKDNGGWTQGELKSGQKGWAPTNYLQYN.

Belongs to the TRAFAC class myosin-kinesin ATPase superfamily. Myosin family. As to quaternary structure, myosin I heavy chain is single-headed. Dimer of a heavy and a light chain. Inability to self-assemble into filaments.

It is found in the cell projection. The protein localises to the pseudopodium. Its subcellular location is the cytoplasm. The protein resides in the cell cortex. Its function is as follows. Myosin is a protein that binds to actin and has ATPase activity that is activated by actin. Myosin IB may have a role in chemotaxis and aggregation; it could serve to stabilize and even retract cortical structures, such as pseudopods and lamellopods. Involved in the whole cell motility of aggregation-stages cells. Overexpression results in significant decrease in the rate of cellular translocation and fluid-phase pinocytosis and abnormalities in the normal rearrangement of the actin cytoskeleton. The protein is Myosin IB heavy chain (myoB) of Dictyostelium discoideum (Social amoeba).